Reading from the N-terminus, the 430-residue chain is Tol-Pal system protein TolB (430 aa).

Residues 1-21 (MRRFVTLLIALLCLSATAVQA) form the signal peptide.

It belongs to the TolB family. As to quaternary structure, the Tol-Pal system is composed of five core proteins: the inner membrane proteins TolA, TolQ and TolR, the periplasmic protein TolB and the outer membrane protein Pal. They form a network linking the inner and outer membranes and the peptidoglycan layer.

The protein resides in the periplasm. Functionally, part of the Tol-Pal system, which plays a role in outer membrane invagination during cell division and is important for maintaining outer membrane integrity. The chain is Tol-Pal system protein TolB from Syntrophotalea carbinolica (strain DSM 2380 / NBRC 103641 / GraBd1) (Pelobacter carbinolicus).